The primary structure comprises 189 residues: Segregation and condensation protein B (189 aa).

Belongs to the ScpB family. As to quaternary structure, homodimer. Homodimerization may be required to stabilize the binding of ScpA to the Smc head domains. Component of a cohesin-like complex composed of ScpA, ScpB and the Smc homodimer, in which ScpA and ScpB bind to the head domain of Smc. The presence of the three proteins is required for the association of the complex with DNA.

It localises to the cytoplasm. Functionally, participates in chromosomal partition during cell division. May act via the formation of a condensin-like complex containing Smc and ScpA that pull DNA away from mid-cell into both cell halves. This Streptococcus mitis protein is Segregation and condensation protein B.